Here is a 371-residue protein sequence, read N- to C-terminus: Bifunctional chorismate mutase/prephenate dehydratase (371 aa).

A Chorismate mutase domain is found at 1–92 (MTLKNALLAF…DSVLTQKKWI (92 aa)). Residues arginine 11, arginine 28, lysine 39, aspartate 48, glutamate 52, serine 84, and glutamine 88 each coordinate substrate. A Prephenate dehydratase domain is found at 104–284 (KISFLGSFGS…NITQFIILAQ (181 aa)). The tract at residues 285 to 371 (KKTYITNKKT…IKCIKILGCF (87 aa)) is regulatory.

The protein localises to the cytoplasm. It catalyses the reaction chorismate = prephenate. The enzyme catalyses prephenate + H(+) = 3-phenylpyruvate + CO2 + H2O. It participates in amino-acid biosynthesis; L-phenylalanine biosynthesis; phenylpyruvate from prephenate: step 1/1. It functions in the pathway metabolic intermediate biosynthesis; prephenate biosynthesis; prephenate from chorismate: step 1/1. Functionally, catalyzes the Claisen rearrangement of chorismate to prephenate and the decarboxylation/dehydration of prephenate to phenylpyruvate. This Buchnera aphidicola subsp. Baizongia pistaciae (strain Bp) protein is Bifunctional chorismate mutase/prephenate dehydratase (pheA).